The sequence spans 211 residues: Riboflavin kinase (211 aa).

Residues 1–85 are H-T-H motif-like; it reads MKKILMLIEL…CDKISNALSK (85 aa). The riboflavin kinase stretch occupies residues 86-211; that stretch reads GVIVGEVVSG…GDRVRLEVIQ (126 aa). Residue 95 to 100 participates in CDP binding; the sequence is GLGEGA. Residues Thr122 and Asn124 each contribute to the Mg(2+) site. 2 residues coordinate FMN: Thr178 and Glu186. Residue 191 to 194 coordinates CDP; sequence VNLR.

Belongs to the archaeal riboflavin kinase family. Mg(2+) serves as cofactor.

It catalyses the reaction riboflavin + CTP = CDP + FMN + H(+). It participates in cofactor biosynthesis; FMN biosynthesis; FMN from riboflavin (CTP route): step 1/1. Its function is as follows. Catalyzes the CTP-dependent phosphorylation of riboflavin (vitamin B2) to form flavin mononucleotide (FMN). This is Riboflavin kinase (ribK) from Thermococcus kodakarensis (strain ATCC BAA-918 / JCM 12380 / KOD1) (Pyrococcus kodakaraensis (strain KOD1)).